We begin with the raw amino-acid sequence, 332 residues long: Phosphoribulokinase (332 aa).

This sequence belongs to the phosphoribulokinase family.

It carries out the reaction D-ribulose 5-phosphate + ATP = D-ribulose 1,5-bisphosphate + ADP + H(+). Its pathway is carbohydrate biosynthesis; Calvin cycle. The sequence is that of Phosphoribulokinase (prk) from Synechocystis sp. (strain ATCC 27184 / PCC 6803 / Kazusa).